The sequence spans 49 residues: Large ribosomal subunit protein bL33 (49 aa).

The protein belongs to the bacterial ribosomal protein bL33 family.

This is Large ribosomal subunit protein bL33 from Alkaliphilus metalliredigens (strain QYMF).